The sequence spans 874 residues: Alanine--tRNA ligase (874 aa).

Zn(2+) contacts are provided by histidine 562, histidine 566, cysteine 664, and histidine 668.

It belongs to the class-II aminoacyl-tRNA synthetase family. The cofactor is Zn(2+).

Its subcellular location is the cytoplasm. The catalysed reaction is tRNA(Ala) + L-alanine + ATP = L-alanyl-tRNA(Ala) + AMP + diphosphate. Catalyzes the attachment of alanine to tRNA(Ala) in a two-step reaction: alanine is first activated by ATP to form Ala-AMP and then transferred to the acceptor end of tRNA(Ala). Also edits incorrectly charged Ser-tRNA(Ala) and Gly-tRNA(Ala) via its editing domain. The chain is Alanine--tRNA ligase from Shewanella baltica (strain OS155 / ATCC BAA-1091).